The following is a 366-amino-acid chain: Cobalt-precorrin-5B C(1)-methyltransferase (366 aa).

Belongs to the CbiD family.

The catalysed reaction is Co-precorrin-5B + S-adenosyl-L-methionine = Co-precorrin-6A + S-adenosyl-L-homocysteine. Its pathway is cofactor biosynthesis; adenosylcobalamin biosynthesis; cob(II)yrinate a,c-diamide from sirohydrochlorin (anaerobic route): step 6/10. Its function is as follows. Catalyzes the methylation of C-1 in cobalt-precorrin-5B to form cobalt-precorrin-6A. The polypeptide is Cobalt-precorrin-5B C(1)-methyltransferase (Hahella chejuensis (strain KCTC 2396)).